The sequence spans 64 residues: UPF0337 protein SH2043 (64 aa).

Residues 1–64 (MAEDKFEQAK…DKVKGNNDNK (64 aa)) are disordered. Positions 22–64 (DNKDLEKEGQNDKASGKAKEAVENVKNKANDLIDKVKGNNDNK) are enriched in basic and acidic residues.

Belongs to the UPF0337 (CsbD) family.

The polypeptide is UPF0337 protein SH2043 (Staphylococcus haemolyticus (strain JCSC1435)).